A 556-amino-acid chain; its full sequence is Glutamine--tRNA ligase (556 aa).

A 'HIGH' region motif is present at residues 33–43 (PEPNGYLHIGH). Residues 34 to 36 (EPN) and 40 to 46 (HIGHAKS) contribute to the ATP site. Residues Asp-66 and Tyr-210 each contribute to the L-glutamine site. Residues Thr-229, 259–260 (RL), and 267–269 (MSK) each bind ATP. The 'KMSKS' region motif lies at 266–270 (VMSKR).

This sequence belongs to the class-I aminoacyl-tRNA synthetase family. In terms of assembly, monomer.

It is found in the cytoplasm. It catalyses the reaction tRNA(Gln) + L-glutamine + ATP = L-glutaminyl-tRNA(Gln) + AMP + diphosphate. The chain is Glutamine--tRNA ligase from Clostridium kluyveri (strain ATCC 8527 / DSM 555 / NBRC 12016 / NCIMB 10680 / K1).